The sequence spans 976 residues: 5'-3' exoribonuclease 2 homolog (976 aa).

The CCHC-type zinc finger occupies Arg-264–Gly-281. The segment covering Asp-411–Lys-420 has biased composition (basic and acidic residues). The tract at residues Asp-411–Gln-442 is disordered. The segment at Asp-535 to Glu-788 is interaction with paxt-1. The segment at Trp-815–Arg-976 is disordered. The segment covering Asp-856 to Gly-866 has biased composition (low complexity).

This sequence belongs to the 5'-3' exonuclease family. XRN2/RAT1 subfamily. As to quaternary structure, interacts with paxt-1 (via N-terminus); the interaction is direct and results in stabilization of xrn-2 in the complex.

It localises to the nucleus. Its function is as follows. Possesses 5'-&gt;3' exoribonuclease activity. Plays a role in maintenance of steady-state concentration and turnover of microRNAs (miRNA) by degradation of mature miRNA. Degradation role is enhanced when in complex with paxt-1. Partially redundant to xrn-1 in miRNA guide strand degradation. Implicated in differential regulation of mRNAs such as let-7 by controlling the accumulation of mature miRNA. Positively regulates molting of the pharyngeal cuticle. The chain is 5'-3' exoribonuclease 2 homolog from Caenorhabditis briggsae.